The primary structure comprises 187 residues: Chromophore lyase CpcS/CpeS 2 (187 aa).

Belongs to the CpcS/CpeS biliprotein lyase family.

Covalently attaches a chromophore to Cys residue(s) of phycobiliproteins. This is Chromophore lyase CpcS/CpeS 2 from Synechococcus sp. (strain JA-3-3Ab) (Cyanobacteria bacterium Yellowstone A-Prime).